Here is a 150-residue protein sequence, read N- to C-terminus: MPIWVDADACPVPIREILCRAATRWQIQTTFIANHAISLPPSPHISRRQVPHGFDVADNEIMDQMSKGDLVITQDIPLAAEAIEKGADVFNPRGQAFTKENIRQRLAMRNFMEEMRNAGQVTGGPAPFSQGDRKEFADQLDRWLQRNARK.

This sequence belongs to the UPF0178 family.

This Marinobacter nauticus (strain ATCC 700491 / DSM 11845 / VT8) (Marinobacter aquaeolei) protein is UPF0178 protein Maqu_2186.